The sequence spans 439 residues: Hydrogenobyrinate a,c-diamide synthase (439 aa).

The GATase cobBQ-type domain maps to 247–439 (RIALAEDGAF…FFHAIARASA (193 aa)). Residue Cys329 is the Nucleophile of the active site.

Belongs to the CobB/CbiA family. Mg(2+) is required as a cofactor.

It catalyses the reaction hydrogenobyrinate + 2 L-glutamine + 2 ATP + 2 H2O = hydrogenobyrinate a,c-diamide + 2 L-glutamate + 2 ADP + 2 phosphate + 2 H(+). It participates in cofactor biosynthesis; adenosylcobalamin biosynthesis; cob(II)yrinate a,c-diamide from precorrin-2 (aerobic route): step 9/10. Catalyzes the ATP-dependent amidation of the two carboxylate groups at positions a and c of hydrogenobyrinate, using either L-glutamine or ammonia as the nitrogen source. The protein is Hydrogenobyrinate a,c-diamide synthase of Mesorhizobium japonicum (strain LMG 29417 / CECT 9101 / MAFF 303099) (Mesorhizobium loti (strain MAFF 303099)).